The primary structure comprises 170 residues: Putative 4-hydroxy-4-methyl-2-oxoglutarate aldolase (170 aa).

Substrate-binding positions include 85–88 (GDMI) and Arg-107. An a divalent metal cation-binding site is contributed by Asp-108.

The protein belongs to the class II aldolase/RraA-like family. Homotrimer. A divalent metal cation is required as a cofactor.

It carries out the reaction 4-hydroxy-4-methyl-2-oxoglutarate = 2 pyruvate. It catalyses the reaction oxaloacetate + H(+) = pyruvate + CO2. Catalyzes the aldol cleavage of 4-hydroxy-4-methyl-2-oxoglutarate (HMG) into 2 molecules of pyruvate. Also contains a secondary oxaloacetate (OAA) decarboxylase activity due to the common pyruvate enolate transition state formed following C-C bond cleavage in the retro-aldol and decarboxylation reactions. The sequence is that of Putative 4-hydroxy-4-methyl-2-oxoglutarate aldolase from Acinetobacter baylyi (strain ATCC 33305 / BD413 / ADP1).